A 125-amino-acid chain; its full sequence is NADH dehydrogenase [ubiquinone] 1 beta subcomplex subunit 8, mitochondrial (125 aa).

The N-terminal 29 residues, 1–29, are a transit peptide targeting the mitochondrion; sequence MAGRLSGVASRIMGGNGVVARSVGSSLRQ. A helical transmembrane segment spans residues 78-98; sequence ALAWLSGGLGFFVGLGLLAVL.

Belongs to the complex I NDUFB8 subunit family. In terms of assembly, complex I is composed of at least 49 different subunits.

The protein resides in the mitochondrion inner membrane. Functionally, accessory subunit of the mitochondrial membrane respiratory chain NADH dehydrogenase (Complex I), that is believed not to be involved in catalysis. Complex I functions in the transfer of electrons from NADH to the respiratory chain. The immediate electron acceptor for the enzyme is believed to be ubiquinone. This is NADH dehydrogenase [ubiquinone] 1 beta subcomplex subunit 8, mitochondrial from Arabidopsis thaliana (Mouse-ear cress).